The primary structure comprises 448 residues: N-succinylarginine dihydrolase (448 aa).

Substrate-binding positions include 19–28 (GGLSYGNVAS), asparagine 110, and 137–138 (HR). Glutamate 174 is an active-site residue. Arginine 214 is a substrate binding site. Residue histidine 250 is part of the active site. 2 residues coordinate substrate: aspartate 252 and asparagine 365. Cysteine 371 (nucleophile) is an active-site residue.

This sequence belongs to the succinylarginine dihydrolase family. In terms of assembly, homodimer.

It catalyses the reaction N(2)-succinyl-L-arginine + 2 H2O + 2 H(+) = N(2)-succinyl-L-ornithine + 2 NH4(+) + CO2. It participates in amino-acid degradation; L-arginine degradation via AST pathway; L-glutamate and succinate from L-arginine: step 2/5. Catalyzes the hydrolysis of N(2)-succinylarginine into N(2)-succinylornithine, ammonia and CO(2). This Pseudomonas syringae pv. tomato (strain ATCC BAA-871 / DC3000) protein is N-succinylarginine dihydrolase.